The chain runs to 74 residues: Putative antitoxin VapB48 (74 aa).

Possibly the antitoxin component of a type II toxin-antitoxin (TA) system. Its cognate toxin is VapC48 (Potential). The sequence is that of Putative antitoxin VapB48 (vapB48) from Mycobacterium tuberculosis (strain CDC 1551 / Oshkosh).